Reading from the N-terminus, the 956-residue chain is Glutamate receptor ionotropic, kainate 4 (956 aa).

Residues methionine 1–cysteine 20 form the signal peptide. Over serine 21–proline 545 the chain is Extracellular. N-linked (GlcNAc...) asparagine glycans are attached at residues asparagine 158, asparagine 220, asparagine 272, asparagine 286, asparagine 323, asparagine 408, asparagine 415, and asparagine 479. L-glutamate contacts are provided by glycine 500, threonine 502, and arginine 507. Residues glycine 546 to alanine 566 form a helical membrane-spanning segment. The Cytoplasmic segment spans residues arginine 567 to glycine 623. Residues valine 624–leucine 644 traverse the membrane as a helical segment. Topologically, residues threonine 645 to asparagine 804 are extracellular. 3 residues coordinate L-glutamate: serine 674, serine 675, and glutamate 723. An N-linked (GlcNAc...) asparagine glycan is attached at asparagine 736. Residues isoleucine 805–leucine 825 form a helical membrane-spanning segment. Residues glutamate 826 to glutamate 956 are Cytoplasmic-facing. Disordered stretches follow at residues arginine 863–asparagine 889 and leucine 931–glutamate 956. Residues arginine 939 to lysine 948 show a composition bias toward basic and acidic residues.

Belongs to the glutamate-gated ion channel (TC 1.A.10.1) family. GRIK4 subfamily. As to quaternary structure, homodimer. Can form functional heteromeric receptors with GRIK1, GRIK2 and GRIK3.

The protein localises to the cell membrane. The protein resides in the postsynaptic cell membrane. It is found in the presynaptic cell membrane. In terms of biological role, ionotropic glutamate receptor that functions as a cation-permeable ligand-gated ion channel. Cannot form functional channels on its own. Shows channel activity only in heteromeric assembly with GRIK1, GRIK2 and GRIK3 subunits. The chain is Glutamate receptor ionotropic, kainate 4 (GRIK4) from Homo sapiens (Human).